A 260-amino-acid polypeptide reads, in one-letter code: Ribosomal RNA small subunit methyltransferase J (260 aa).

Residues 125–126 and Asp179 contribute to the S-adenosyl-L-methionine site; that span reads ER.

This sequence belongs to the methyltransferase superfamily. RsmJ family.

It localises to the cytoplasm. It carries out the reaction guanosine(1516) in 16S rRNA + S-adenosyl-L-methionine = N(2)-methylguanosine(1516) in 16S rRNA + S-adenosyl-L-homocysteine + H(+). Specifically methylates the guanosine in position 1516 of 16S rRNA. The sequence is that of Ribosomal RNA small subunit methyltransferase J from Pseudomonas fluorescens (strain ATCC BAA-477 / NRRL B-23932 / Pf-5).